A 429-amino-acid chain; its full sequence is Protein FAM98B (429 aa).

A disordered region spans residues 304–429 (RVPDRGGRPN…GGGGGGYRRY (126 aa)). The segment covering 305-314 (VPDRGGRPNE) has biased composition (basic and acidic residues). The segment covering 332 to 429 (GGRGGWGGGG…GGGGGGYRRY (98 aa)) has biased composition (gly residues).

This sequence belongs to the FAM98 family. As to quaternary structure, homodimer. Component of a tRNA-splicing ligase complex. Interacts with FAM98A.

The protein resides in the nucleus. The protein localises to the cytoplasm. In terms of biological role, positively stimulates PRMT1-induced protein arginine dimethylated arginine methylation. This chain is Protein FAM98B (Fam98b), found in Mus musculus (Mouse).